Here is a 27-residue protein sequence, read N- to C-terminus: Cruzioseptin-14 (27 aa).

As to expression, expressed by the skin glands.

It is found in the secreted. In terms of biological role, has antimicrobial activity. This is Cruzioseptin-14 from Cruziohyla calcarifer (Splendid leaf frog).